A 384-amino-acid polypeptide reads, in one-letter code: S-adenosylmethionine synthase (384 aa).

His15 is an ATP binding site. Asp17 contacts Mg(2+). A K(+)-binding site is contributed by Glu43. Residues Glu56 and Gln99 each contribute to the L-methionine site. The interval 99–109 (QSPDINQGVDR) is flexible loop. ATP is bound by residues 164-166 (DAK), 230-231 (RF), Asp239, 245-246 (RK), Ala262, and Lys266. Asp239 is an L-methionine binding site. Lys270 provides a ligand contact to L-methionine.

Belongs to the AdoMet synthase family. Homotetramer; dimer of dimers. It depends on Mg(2+) as a cofactor. The cofactor is K(+).

It localises to the cytoplasm. It catalyses the reaction L-methionine + ATP + H2O = S-adenosyl-L-methionine + phosphate + diphosphate. Its pathway is amino-acid biosynthesis; S-adenosyl-L-methionine biosynthesis; S-adenosyl-L-methionine from L-methionine: step 1/1. Catalyzes the formation of S-adenosylmethionine (AdoMet) from methionine and ATP. The overall synthetic reaction is composed of two sequential steps, AdoMet formation and the subsequent tripolyphosphate hydrolysis which occurs prior to release of AdoMet from the enzyme. This chain is S-adenosylmethionine synthase, found in Proteus mirabilis (strain HI4320).